Consider the following 393-residue polypeptide: uncharacterized protein (393 aa).

The interval 345–393 (PNKWATDDAARREMERTRKARYRAKNRAVADPEDSPPGKRLRRGPKSST) is disordered. The span at 349 to 361 (ATDDAARREMERT) shows a compositional bias: basic and acidic residues. The span at 383–393 (KRLRRGPKSST) shows a compositional bias: basic residues.

This is an uncharacterized protein from Ictalurid herpesvirus 1 (strain Auburn) (IcHV-1).